A 579-amino-acid chain; its full sequence is Probable zinc metalloprotease EGY1, chloroplastic (579 aa).

Disordered regions lie at residues Met1–Ala42 and Gly78–Pro146. The N-terminal 44 residues, Met1–Cys44, are a transit peptide targeting the chloroplast. Residues Leu16 to Ala42 are compositionally biased toward low complexity. A compositionally biased stretch (gly residues) spans Gly78–Gly92. Composition is skewed to low complexity over residues Ala104 to Val115 and Ser125 to Gly137. Transmembrane regions (helical) follow at residues Tyr272 to Ala292, Leu321 to Phe341, Leu357 to Phe377, Met392 to Leu412, Ala419 to Val439, Ala452 to Phe472, Leu505 to Ile525, and Ala547 to Leu567.

Belongs to the peptidase M50B family.

It is found in the plastid. It localises to the chloroplast membrane. Its function is as follows. Probable membrane-associated metalloprotease that may be involved in chloroplast development. The sequence is that of Probable zinc metalloprotease EGY1, chloroplastic (EGY1) from Oryza sativa subsp. japonica (Rice).